The following is a 108-amino-acid chain: ADM5 (108 aa).

The N-terminal stretch at 1–18 (MTAHILLLWLFASSILGD) is a signal peptide. Positions 19 to 25 (PDSAGRL) are excised as a propeptide. A disulfide bridge connects residues Cys-38 and Cys-43. Residues 61–108 (KELSGKAGRKPQDPYSYGRRRRRRRRRREARLLRRLQDPSLRRAQLAG) form a disordered region. Tyr-77 is modified (tyrosine amide). The segment covering 78–89 (GRRRRRRRRRRE) has biased composition (basic residues). The propeptide occupies 89 to 108 (EARLLRRLQDPSLRRAQLAG). Positions 90-101 (ARLLRRLQDPSL) are enriched in basic and acidic residues.

This sequence belongs to the adrenomedullin family. As to expression, expressed abundantly in the spleen and thymus. Also expressed in adrenal and pituitary. Not expressed in brain, heart, kidney, liver and stomach.

It is found in the secreted. Its function is as follows. Seems to have a peripheral vasodepressor effect and a central vasopressor effect. The sequence is that of ADM5 (ADM5) from Sus scrofa (Pig).